A 217-amino-acid polypeptide reads, in one-letter code: tRNA (guanine-N(7)-)-methyltransferase (217 aa).

The S-adenosyl-L-methionine site is built by Glu-43, Asp-68, Asn-101, and Asn-123. Lys-127 lines the substrate pocket. An interaction with RNA region spans residues 129-134 (RHNKRR). Residues Asp-159 and 196–199 (TEYE) each bind substrate.

This sequence belongs to the class I-like SAM-binding methyltransferase superfamily. TrmB family.

It carries out the reaction guanosine(46) in tRNA + S-adenosyl-L-methionine = N(7)-methylguanosine(46) in tRNA + S-adenosyl-L-homocysteine. Its pathway is tRNA modification; N(7)-methylguanine-tRNA biosynthesis. Catalyzes the formation of N(7)-methylguanine at position 46 (m7G46) in tRNA. The polypeptide is tRNA (guanine-N(7)-)-methyltransferase (Clostridium botulinum (strain Loch Maree / Type A3)).